The following is a 217-amino-acid chain: Translation initiation factor IF-3 (217 aa).

Residues 185–217 (YNLPETETTRIREENREKQKEKENTSKEGNKDA) are disordered. The segment covering 191–217 (ETTRIREENREKQKEKENTSKEGNKDA) has biased composition (basic and acidic residues).

This sequence belongs to the IF-3 family. Monomer.

It is found in the cytoplasm. IF-3 binds to the 30S ribosomal subunit and shifts the equilibrium between 70S ribosomes and their 50S and 30S subunits in favor of the free subunits, thus enhancing the availability of 30S subunits on which protein synthesis initiation begins. The chain is Translation initiation factor IF-3 from Methylacidiphilum infernorum (isolate V4) (Methylokorus infernorum (strain V4)).